The chain runs to 106 residues: Iron-sulfur cluster assembly protein CyaY (106 aa).

It belongs to the frataxin family.

Its function is as follows. Involved in iron-sulfur (Fe-S) cluster assembly. May act as a regulator of Fe-S biogenesis. The protein is Iron-sulfur cluster assembly protein CyaY of Yersinia pestis bv. Antiqua (strain Antiqua).